The primary structure comprises 756 residues: Probable cleavage and polyadenylation specificity factor subunit 2 (756 aa).

Phosphothreonine occurs at positions 221 and 226.

This sequence belongs to the metallo-beta-lactamase superfamily. RNA-metabolizing metallo-beta-lactamase-like family. CPSF2/YSH1 subfamily. In terms of assembly, component of the cleavage and polyadenylation specificity factor (CPSF) complex, composed of at least Clp, Cpsf73, Cpsf100 and Cpsf160. Interacts with Sym and Cpsf73 forming a core cleavage factor required for both polyadenylated and histone mRNA processing. Interacts with Slbp and Lsm11.

It is found in the nucleus. Functionally, component of the cleavage and polyadenylation specificity factor (CPSF) complex that plays a key role in pre-mRNA 3'-end formation, recognizing the AAUAAA signal sequence and interacting with poly(A) polymerase and other factors to bring about cleavage and poly(A) addition. Required for the cotranscriptional processing of 3'-ends of polyadenylated and histone pre-mRNA. In Drosophila melanogaster (Fruit fly), this protein is Probable cleavage and polyadenylation specificity factor subunit 2 (Cpsf100).